Consider the following 439-residue polypeptide: DNA 3'-5' translocase XPB2 (439 aa).

The tract at residues 1 to 54 is DRD domain; that stretch reads MVYLRYFKGLILSDAYAPGLKWSDELKAYSALAFKYRDVRKYFLEKEIEVEENV. Residues 77-221 form the Helicase ATP-binding domain; sequence VKAWLKEKRG…LYPILVGPIV (145 aa). Residues 90–97 and R127 each bind ATP; that span reads LPTGAGKT. The DEAH box signature appears at 174 to 177; that stretch reads DEVH. The RED motif motif lies at 205–207; that stretch reads RDD. Residues 227–234 are flexible hinge region; that stretch reads EELAGKYI. The segment at 248-307 is thM region; it reads NEEKKRYDGLRKKLKDFLSSRGLKLQNLDDFHRLVKLAAKDKEAREALLAWHESLNIAVN. In terms of domain architecture, Helicase C-terminal spans 311 to 439; sequence KIEKLREILQ…DYRLSRRRRE (129 aa).

Belongs to the helicase family. RAD25/XPB subfamily. As to quaternary structure, forms a heterodimer with Bax1.

It catalyses the reaction Couples ATP hydrolysis with the unwinding of duplex DNA by translocating in the 3'-5' direction.. It carries out the reaction ATP + H2O = ADP + phosphate + H(+). In terms of biological role, ATP-dependent DNA translocase which moves along double-stranded DNA (dsDNA) in a 3'-5' direction, unwinding the DNA. The ThM domain grips the resulting 3'-ssDNA tail and functions as a wedge (particularly Phe-278), breaking dsDNA base pairs, probably using the energy from ATP hydrolysis to move along dsDNA. A DNA-dependent ATPase; double-stranded DNA (dsDNA) stimulates the activity more than single-stranded DNA (ssDNA), while Bax1 stimulates ATPase more. In an in vitro assay had no detectable helicase activity. Binds ssDNA better than dsDNA. Has very low ATPase activity that is stimulated by Bax1; dsDNA, Y-form DNA and a DNA substrate with a 6 base pair (bp) bubble in the center stimulate the XPB2-Bax1 ATPase activity about 10- 20-fold more than the absence of DNA. In an XPB2-Bax1-bubble DNA crystal (12 bp of dsDNA, a 6 base bubble and 6 bp of dsDNA) the short 6 bp arm is unwound. The 2 helicase and the ThM domains of XPB2 with the NTD and CRD domains of Bax1 encircle the DNA, forming a tunnel where the 12 bp dsDNA and the ds-ssDNA junction are located. The ThM domain is wedged between the ssDNA tails, with the 5' ssDNA contacting Bax1 and the 3' ssDNA in a channel in XPB2. Bax1 increases the affinity of XPB2 for forked DNA. The polypeptide is DNA 3'-5' translocase XPB2 (Sulfurisphaera tokodaii (strain DSM 16993 / JCM 10545 / NBRC 100140 / 7) (Sulfolobus tokodaii)).